The following is a 359-amino-acid chain: Src kinase-associated phosphoprotein 2 (359 aa).

Serine 5, serine 6, and serine 9 each carry phosphoserine. The segment at 14–64 is homodimerization; that stretch reads PEEIRNLLADVETFVADILKGENLSKKAKEKRESLIKKIKDVKSIYLQEFQ. Residues 66 to 88 are disordered; it reads KGDAEDGEEYDDPFAGPPDTISL. The residue at position 75 (tyrosine 75) is a Phosphotyrosine. Phosphoserine occurs at positions 87 and 90. The region spanning 116-219 is the PH domain; the sequence is FVLKAGYLEK…WVQQLKFVLQ (104 aa). Phosphotyrosine is present on residues tyrosine 151 and tyrosine 197. Serine 223 is modified (phosphoserine). A Phosphotyrosine modification is found at tyrosine 261. Residues 264-293 form a disordered region; it reads LPEEEEDSAPVKVEEQRKMSQDSVHHTSGD. Residues 275 to 293 show a composition bias toward basic and acidic residues; sequence KVEEQRKMSQDSVHHTSGD. Phosphoserine is present on residues serine 283 and serine 286. The region spanning 297–358 is the SH3 domain; the sequence is DYANFYQGLW…PKAYIMEMYD (62 aa).

The protein belongs to the SKAP family. As to quaternary structure, homodimer. Interacts with PTPNS1. Part of a complex consisting of SKAP2, FYB1 and PTPNS1. Part of a complex consisting of SKAP2, FYB1 and LILRB3. May interact with actin. Interacts with FYB1, which is required for SKAP2 protein stability. Interacts with LAT, GRB2, PTK2B and PRAM1. May interact with FYN, HCK and LYN. Interacts with FASLG. Phosphorylated in resting platelets. Phosphorylated by FYN on Tyr-261 upon T-cell activation. Dephosphorylated on Tyr-75 by PTPN22. Ubiquitously expressed. Present in platelets (at protein level).

Its subcellular location is the cytoplasm. Functionally, may be involved in B-cell and macrophage adhesion processes. In B-cells, may act by coupling the B-cell receptor (BCR) to integrin activation. May play a role in src signaling pathway. The polypeptide is Src kinase-associated phosphoprotein 2 (SKAP2) (Homo sapiens (Human)).